Here is a 260-residue protein sequence, read N- to C-terminus: Thiazole synthase (260 aa).

Lysine 96 (schiff-base intermediate with DXP) is an active-site residue. Residues glycine 157, 184–185 (AG), and 206–207 (NT) each bind 1-deoxy-D-xylulose 5-phosphate.

The protein belongs to the ThiG family. As to quaternary structure, homotetramer. Forms heterodimers with either ThiH or ThiS.

The protein resides in the cytoplasm. It carries out the reaction [ThiS sulfur-carrier protein]-C-terminal-Gly-aminoethanethioate + 2-iminoacetate + 1-deoxy-D-xylulose 5-phosphate = [ThiS sulfur-carrier protein]-C-terminal Gly-Gly + 2-[(2R,5Z)-2-carboxy-4-methylthiazol-5(2H)-ylidene]ethyl phosphate + 2 H2O + H(+). The protein operates within cofactor biosynthesis; thiamine diphosphate biosynthesis. Functionally, catalyzes the rearrangement of 1-deoxy-D-xylulose 5-phosphate (DXP) to produce the thiazole phosphate moiety of thiamine. Sulfur is provided by the thiocarboxylate moiety of the carrier protein ThiS. In vitro, sulfur can be provided by H(2)S. This chain is Thiazole synthase, found in Rhodopseudomonas palustris (strain BisB18).